The sequence spans 138 residues: MAKAIPRVGSRKNGRISSRKSARRIPKGVIHVQASFHNTIVTVTDVRGRVVSWSSAGTCGFRGTRRGTPFAAQTAAANAIRTVVDQGMQRAEVMIKGPGLGRDAALRAIRRSGIVLTFVRDVTPMPHNGCRPPKKRRV.

The interval 1–23 (MAKAIPRVGSRKNGRISSRKSAR) is disordered. A compositionally biased stretch (basic residues) spans 9–23 (GSRKNGRISSRKSAR).

This sequence belongs to the universal ribosomal protein uS11 family. Part of the 30S ribosomal subunit.

Its subcellular location is the plastid. It localises to the chloroplast. The polypeptide is Small ribosomal subunit protein uS11c (Coffea arabica (Arabian coffee)).